We begin with the raw amino-acid sequence, 140 residues long: Fluoride-specific ion channel FluC 1 (140 aa).

4 helical membrane-spanning segments follow: residues 4 to 24 (LYLA…ASFI), 32 to 52 (FPLA…FILT), 70 to 90 (TGML…LHLL), and 99 to 119 (LLYL…GIFL). Na(+) is bound by residues G74 and T77.

This sequence belongs to the fluoride channel Fluc/FEX (TC 1.A.43) family.

Its subcellular location is the cell membrane. The enzyme catalyses fluoride(in) = fluoride(out). Its activity is regulated as follows. Na(+) is not transported, but it plays an essential structural role and its presence is essential for fluoride channel function. In terms of biological role, fluoride-specific ion channel. Important for reducing fluoride concentration in the cell, thus reducing its toxicity. This chain is Fluoride-specific ion channel FluC 1, found in Moorella thermoacetica (strain ATCC 39073 / JCM 9320).